The chain runs to 614 residues: Vitamin B12 transporter BtuB (614 aa).

Residues 1–20 form the signal peptide; it reads MIKKASLLTACSVTAFSAWA. A TonB box motif is present at residues 26-33; sequence DTLVVTAN. One can recognise a TBDR plug domain in the interval 38–152; it reads PRSTVLAPTT…IGGVVNIITT (115 aa). Cyanocob(III)alamin contacts are provided by residues leucine 83, serine 85, asparagine 92, and 110 to 111; that span reads VS. The TBDR beta-barrel domain maps to 155–614; that stretch reads EPGTEISAGW…EYTLSGSYTF (460 aa). Transmembrane regions (beta stranded) follow at residues 158–165, 169–178, and 184–195; these read TEISAGWG, YQNYDVSTQQ, and TRVTLLGDYAHT. Ca(2+) is bound by residues aspartate 199, glutamine 211, aspartate 213, and aspartate 215. The next 2 membrane-spanning stretches (beta stranded) occupy residues 217-227 and 232-248; these read FLSKTLYGALE and DAWS…NRTN. Residues tyrosine 249 and aspartate 250 each contribute to the Ca(2+) site. Alanine 251 lines the cyanocob(III)alamin pocket. Aspartate 261 serves as a coordination point for Ca(2+). 14 beta stranded membrane-spanning segments follow: residues 263-277, 279-296, 309-325, 328-337, 353-369, 371-381, 385-400, 403-417, 434-443, 449-458, 473-490, 494-509, 517-529, and 535-550; these read RKLY…LRYN, ELIK…KDYN, TLDE…NNVI, HGSIGAGVDW, YDQR…QQVG, FTFEGAARSDD, FGRH…WEFI, YRFI…KAPN, KSKQWEGAFE, VNWRISGYRN, YYNE…TANF, PLTH…ARNA, RRAK…QLDW, and DWGI…YDKD. Threonine 309 serves as a coordination point for cyanocob(III)alamin. Arginine 517 contacts cyanocob(III)alamin. Tyrosine 551 contacts cyanocob(III)alamin. 3 beta stranded membrane passes run 558–572, 585–596, and 602–614; these read TVKM…LAVA, IANLFDKDYETV, and AGRE…SYTF. A TonB C-terminal box motif is present at residues 597–614; that stretch reads YGYQTAGREYTLSGSYTF.

The protein belongs to the TonB-dependent receptor family. BtuB (TC 1.B.14.3.1) subfamily.

It is found in the cell outer membrane. Its function is as follows. Involved in the active translocation of vitamin B12 (cyanocobalamin) across the outer membrane to the periplasmic space. It derives its energy for transport by interacting with the trans-periplasmic membrane protein TonB. The protein is Vitamin B12 transporter BtuB of Escherichia coli O9:H4 (strain HS).